The sequence spans 271 residues: Transcription factor PU.1 (271 aa).

Positions 124–164 are disordered; that stretch reads LSPAHQQSSDEEEGERQSPPLEVSDGEADGLEPGPGLLHGE. Residues S141 and S147 each carry the phosphoserine modification. Low complexity predominate over residues 154-164; sequence LEPGPGLLHGE. Residues 171-254 constitute a DNA-binding region (ETS); sequence IRLYQFLLDL…VKKKLTYQFS (84 aa). The DNA site is built by K218, R231, R234, and K244.

It belongs to the ETS family. As to quaternary structure, binds DNA as a monomer. Can form homomers. Directly interacts with CEBPD/NF-IL6-beta; this interaction does not affect DNA-binding properties of each partner. Interacts with NONO/p54(nrb). Interacts with RUNX1/AML1. Interacts with GFI1; the interaction represses SPI1 transcriptional activity, hence blocks SPI1-induced macrophage differentiation of myeloid progenitor cells. Interacts with CEBPE. Interacts with IRF4/Pip and IRF8. Interacts with JUN. Interacts with RB1. Interacts with TBP.

Its subcellular location is the nucleus. Transcriptional activity at macrophage-specific genes is inhibited by interaction with GFI1, which results in the inhibition of SPI1-induced macrophage differentiation of myeloid progenitor cells, but not that of the granulocyte lineage. Its function is as follows. Pioneer transcription factor, which controls hematopoietic cell fate by decompacting stem cell heterochromatin and allowing other transcription factors to enter otherwise inaccessible genomic sites. Once in open chromatin, can directly control gene expression by binding genetic regulatory elements and can also more broadly influence transcription by recruiting transcription factors, such as interferon regulatory factors (IRFs), to otherwise inaccessible genomic regions. Transcriptionally activates genes important for myeloid and lymphoid lineages, such as CSF1R or FCER1A. Transcriptional activation from certain promoters, possibly containing low affinity binding sites, is achieved cooperatively with other transcription factors. FCER1A transactivation is achieved in cooperation with GATA1. May be particularly important for the pro- to pre-B cell transition. Binds (via the ETS domain) onto the purine-rich DNA core sequence 5'-GAGGAA-3', also known as the PU-box. In vitro can bind RNA and interfere with pre-mRNA splicing. This is Transcription factor PU.1 (Spi1) from Rattus norvegicus (Rat).